The sequence spans 592 residues: MQLFIVKLDSRSSASNEILVLDINELRKYVSKHQLSFRGAQVHETNSEHSVRNWEDDNITMFFHTSNVFPSEKSVRHALFSRNSVHVCGPLNIGAFRDSLRVLQSPQFPIHTYGDDITVFDKLREFVVVPNSLAVVDMDTSAWERYTYSLFTDEPGTITLADETPPTISPTGRDSVSPVARFSPSISISSIAIGEVGSASKRRQRLVKQAKSSDKTPIPEIRLNKKDTVFAETGTEQASPKTEIVAATVHKIPVNHAEADKRVVVLKGRTKDKAQEVREVTSLARDTTGVEHELMQSVGDDSVQVSGELSGFGDESFEVSKTDVVGVENKQLALDRVPALEPCGEVSEDEELVSEGMYAVPLDLDIYAEKCPSPTPPNSPKKREKADHEPIDISSAMMKLRLIAAAFQKEMMAYDKIDCLSSDDPAYLLAQFCLRNLNGVFVPEYVEEHSSDEENADDPNQGWNGTPVHGSREIFEKLSESRLASMEMISNVKPIRWNSKKTTYAVTIERGNPNLIVTQSLTRGQSSQFRKVIRAFGCSTDYCLERLASRDYDAILMLMSSLSGACHATKSYCYLQIVAYGSFAAPECKELD.

Residues 450–469 (SSDEENADDPNQGWNGTPVH) form a disordered region.

The protein resides in the host cell junction. It is found in the host plasmodesma. Its function is as follows. Transports viral genome to neighboring plant cells directly through plasmosdesmata, without any budding. The movement protein allows efficient cell to cell propagation, by bypassing the host cell wall barrier. Displays sequence non-specific nucleic acid binding activity. Acts as a suppressor of RNA-mediated gene silencing, also known as post-transcriptional gene silencing (PTGS), a mechanism of plant viral defense that limits the accumulation of viral RNAs. The sequence is that of Movement and RNA silencing protein VP6 from Oryza latifolia (Indian wild rice).